Reading from the N-terminus, the 204-residue chain is Holliday junction branch migration complex subunit RuvA (204 aa).

Positions 1 to 64 are domain I; sequence MIGRLQGILL…EDAHLLFGFS (64 aa). Residues 65–143 are domain II; the sequence is AKTDRTLFRE…GIKQPDFFVE (79 aa). Residues 144–155 form a flexible linker region; that stretch reads SSHVGAVDPVTT. Residues 156 to 204 form a domain III region; sequence SPEVPAEEAVAALMALGYKASDAEKMVKRIAKPHLTSEQLIREALKAAL.

It belongs to the RuvA family. In terms of assembly, homotetramer. Forms an RuvA(8)-RuvB(12)-Holliday junction (HJ) complex. HJ DNA is sandwiched between 2 RuvA tetramers; dsDNA enters through RuvA and exits via RuvB. An RuvB hexamer assembles on each DNA strand where it exits the tetramer. Each RuvB hexamer is contacted by two RuvA subunits (via domain III) on 2 adjacent RuvB subunits; this complex drives branch migration. In the full resolvosome a probable DNA-RuvA(4)-RuvB(12)-RuvC(2) complex forms which resolves the HJ.

The protein resides in the cytoplasm. Functionally, the RuvA-RuvB-RuvC complex processes Holliday junction (HJ) DNA during genetic recombination and DNA repair, while the RuvA-RuvB complex plays an important role in the rescue of blocked DNA replication forks via replication fork reversal (RFR). RuvA specifically binds to HJ cruciform DNA, conferring on it an open structure. The RuvB hexamer acts as an ATP-dependent pump, pulling dsDNA into and through the RuvAB complex. HJ branch migration allows RuvC to scan DNA until it finds its consensus sequence, where it cleaves and resolves the cruciform DNA. The chain is Holliday junction branch migration complex subunit RuvA from Mannheimia succiniciproducens (strain KCTC 0769BP / MBEL55E).